Reading from the N-terminus, the 602-residue chain is Elongation factor 4 (602 aa).

In terms of domain architecture, tr-type G spans 7–189 (SRIRNFSIIA…SIVQQVPPPA (183 aa)). GTP is bound by residues 19–24 (DHGKST) and 136–139 (NKID).

Belongs to the TRAFAC class translation factor GTPase superfamily. Classic translation factor GTPase family. LepA subfamily.

It localises to the cell inner membrane. The catalysed reaction is GTP + H2O = GDP + phosphate + H(+). Its function is as follows. Required for accurate and efficient protein synthesis under certain stress conditions. May act as a fidelity factor of the translation reaction, by catalyzing a one-codon backward translocation of tRNAs on improperly translocated ribosomes. Back-translocation proceeds from a post-translocation (POST) complex to a pre-translocation (PRE) complex, thus giving elongation factor G a second chance to translocate the tRNAs correctly. Binds to ribosomes in a GTP-dependent manner. The sequence is that of Elongation factor 4 from Picosynechococcus sp. (strain ATCC 27264 / PCC 7002 / PR-6) (Agmenellum quadruplicatum).